The chain runs to 220 residues: Charged multivesicular body protein 5 (220 aa).

Over residues 1-10 the composition is skewed to basic residues; the sequence is MNRIFGRGKP. A disordered region spans residues 1–27; the sequence is MNRIFGRGKPKGPPPNLTDCISGVDSR. Coiled-coil stretches lie at residues 25–55 and 121–153; these read DSRAESVDKKIARLDAELMKYKDQMKKMRDG and KNVKIDQIEDLQDQLEDMMEDANEVQEALSRSY. Residues 178-206 are disordered; the sequence is DDNSYLDEASSAPAIPEGAPGDRTTNRDG.

The protein belongs to the SNF7 family. In terms of assembly, probable peripherally associated component of the endosomal sorting required for transport complex III (ESCRT-III).

Its subcellular location is the cytoplasm. It localises to the cytosol. The protein resides in the endosome membrane. Functionally, probable peripherally associated component of the endosomal sorting required for transport complex III (ESCRT-III) which is involved in multivesicular bodies (MVBs) formation and sorting of endosomal cargo proteins into MVBs. MVBs contain intraluminal vesicles (ILVs) that are generated by invagination and scission from the limiting membrane of the endosome and mostly are delivered to lysosomes enabling degradation of membrane proteins, such as stimulated growth factor receptors, lysosomal enzymes and lipids. This chain is Charged multivesicular body protein 5 (chmp5), found in Danio rerio (Zebrafish).